A 457-amino-acid polypeptide reads, in one-letter code: Bifunctional protein GlmU (457 aa).

Positions 1 to 230 (MSKRYAVVLA…FEESLGVNDR (230 aa)) are pyrophosphorylase. UDP-N-acetyl-alpha-D-glucosamine is bound by residues 9–12 (LAAG), Lys-23, Gln-73, and 78–79 (GT). Residue Asp-103 participates in Mg(2+) binding. 4 residues coordinate UDP-N-acetyl-alpha-D-glucosamine: Gly-140, Glu-155, Asn-170, and Asn-228. Asn-228 lines the Mg(2+) pocket. A linker region spans residues 231 to 251 (IALAEASKLMQRRINENHMRN). Residues 252 to 457 (GVTLVNPEST…GYAKHLNHGK (206 aa)) form an N-acetyltransferase region. UDP-N-acetyl-alpha-D-glucosamine is bound by residues Arg-333 and Lys-351. His-363 (proton acceptor) is an active-site residue. The UDP-N-acetyl-alpha-D-glucosamine site is built by Tyr-366 and Asn-377. Residues 386–387 (NY), Ala-423, and Arg-440 contribute to the acetyl-CoA site.

The protein in the N-terminal section; belongs to the N-acetylglucosamine-1-phosphate uridyltransferase family. In the C-terminal section; belongs to the transferase hexapeptide repeat family. As to quaternary structure, homotrimer. The cofactor is Mg(2+).

It localises to the cytoplasm. It catalyses the reaction alpha-D-glucosamine 1-phosphate + acetyl-CoA = N-acetyl-alpha-D-glucosamine 1-phosphate + CoA + H(+). The enzyme catalyses N-acetyl-alpha-D-glucosamine 1-phosphate + UTP + H(+) = UDP-N-acetyl-alpha-D-glucosamine + diphosphate. It functions in the pathway nucleotide-sugar biosynthesis; UDP-N-acetyl-alpha-D-glucosamine biosynthesis; N-acetyl-alpha-D-glucosamine 1-phosphate from alpha-D-glucosamine 6-phosphate (route II): step 2/2. Its pathway is nucleotide-sugar biosynthesis; UDP-N-acetyl-alpha-D-glucosamine biosynthesis; UDP-N-acetyl-alpha-D-glucosamine from N-acetyl-alpha-D-glucosamine 1-phosphate: step 1/1. The protein operates within bacterial outer membrane biogenesis; LPS lipid A biosynthesis. Its function is as follows. Catalyzes the last two sequential reactions in the de novo biosynthetic pathway for UDP-N-acetylglucosamine (UDP-GlcNAc). The C-terminal domain catalyzes the transfer of acetyl group from acetyl coenzyme A to glucosamine-1-phosphate (GlcN-1-P) to produce N-acetylglucosamine-1-phosphate (GlcNAc-1-P), which is converted into UDP-GlcNAc by the transfer of uridine 5-monophosphate (from uridine 5-triphosphate), a reaction catalyzed by the N-terminal domain. The sequence is that of Bifunctional protein GlmU from Listeria monocytogenes serotype 4a (strain HCC23).